The following is a 205-amino-acid chain: Proteasome subunit beta type-3 (205 aa).

Serine 2 carries the N-acetylserine modification. Lysine 77 bears the N6-acetyllysine mark.

Belongs to the peptidase T1B family. In terms of assembly, the 26S proteasome consists of a 20S proteasome core and two 19S regulatory subunits. The 20S proteasome core is a barrel-shaped complex made of 28 subunits that are arranged in four stacked rings. The two outer rings are each formed by seven alpha subunits, and the two inner rings are formed by seven beta subunits. The proteolytic activity is exerted by three beta-subunits PSMB5, PSMB6 and PSMB7.

The protein resides in the cytoplasm. It is found in the nucleus. Its function is as follows. Non-catalytic component of the 20S core proteasome complex involved in the proteolytic degradation of most intracellular proteins. This complex plays numerous essential roles within the cell by associating with different regulatory particles. Associated with two 19S regulatory particles, forms the 26S proteasome and thus participates in the ATP-dependent degradation of ubiquitinated proteins. The 26S proteasome plays a key role in the maintenance of protein homeostasis by removing misfolded or damaged proteins that could impair cellular functions, and by removing proteins whose functions are no longer required. Associated with the PA200 or PA28, the 20S proteasome mediates ubiquitin-independent protein degradation. This type of proteolysis is required in several pathways including spermatogenesis (20S-PA200 complex) or generation of a subset of MHC class I-presented antigenic peptides (20S-PA28 complex). This Bos taurus (Bovine) protein is Proteasome subunit beta type-3 (PSMB3).